The sequence spans 95 residues: Phosphoribosyl-ATP pyrophosphatase (95 aa).

Belongs to the PRA-PH family.

The protein localises to the cytoplasm. It carries out the reaction 1-(5-phospho-beta-D-ribosyl)-ATP + H2O = 1-(5-phospho-beta-D-ribosyl)-5'-AMP + diphosphate + H(+). The protein operates within amino-acid biosynthesis; L-histidine biosynthesis; L-histidine from 5-phospho-alpha-D-ribose 1-diphosphate: step 2/9. This chain is Phosphoribosyl-ATP pyrophosphatase, found in Sulfolobus acidocaldarius (strain ATCC 33909 / DSM 639 / JCM 8929 / NBRC 15157 / NCIMB 11770).